Reading from the N-terminus, the 454-residue chain is Anthocyanidin 3-O-galactosyltransferase 3GT6 (454 aa).

The signal sequence occupies residues 1 to 21; that stretch reads MTNSSKGRHVAVLPFPFSTHA. S18 and H20 together coordinate an anthocyanidin. H20 acts as the Proton acceptor in catalysis. The active-site Charge relay is the D117. H148 provides a ligand contact to an anthocyanidin. Positions 331, 333, 348, 351, 352, 353, and 356 each coordinate UDP-alpha-D-glucose. G371 contributes to the an anthocyanidin binding site. D372 is a UDP-alpha-D-glucose binding site. A glycan (N-linked (GlcNAc...) asparagine) is linked at N441.

The protein belongs to the UDP-glycosyltransferase family. In terms of assembly, monomer. As to expression, mostly expressed in leaves and flowers and, to a lower extent, in roots. In flowers, mainly observed in petals, stamens and scapes, and at lower levels in pistils and toruses.

The enzyme catalyses cyanidin + UDP-alpha-D-galactose = cyanidin 3-O-beta-D-galactoside + UDP + H(+). The catalysed reaction is cyanidin + UDP-alpha-D-glucose = cyanidin 3-O-beta-D-glucoside + UDP + H(+). It catalyses the reaction delphinidin + UDP-alpha-D-glucose = delphinidin 3-O-beta-D-glucoside + UDP. It carries out the reaction peonidin + UDP-alpha-D-glucose = peonidin 3-O-beta-D-glucoside + UDP. The enzyme catalyses pelargonidin + UDP-alpha-D-glucose = pelargonidin 3-O-beta-D-glucoside + UDP. The catalysed reaction is delphinidin + UDP-alpha-D-galactose = delphinidin 3-O-beta-D-galactoside + UDP + H(+). It catalyses the reaction pelargonidin + UDP-alpha-D-galactose = pelargonidin 3-O-beta-D-galactoside betaine + UDP. It carries out the reaction peonidin + UDP-alpha-D-galactose = peonidin 3-O-beta-D-galactoside + UDP. The enzyme catalyses petunidin + UDP-alpha-D-galactose = petunidin 3-O-beta-D-galactoside + UDP. The catalysed reaction is petunidin + UDP-alpha-D-glucose = petunidin 3-O-beta-D-glucoside + UDP. It catalyses the reaction an anthocyanidin + UDP-alpha-D-glucose + H(+) = an anthocyanidin 3-O-beta-D-glucoside + UDP. It carries out the reaction an anthocyanidin + UDP-alpha-D-galactose = an anthocyanidin 3-O-beta-D-galactoside + UDP. It functions in the pathway pigment biosynthesis; anthocyanin biosynthesis. Its function is as follows. Flavonoid 3-O-glycosyltransferase involved in the biosynthesis of anthocyanins conferring flower red/pink colors, mainly anthocyanidin 3-O-glycosides. Catalyzes the addition of UDP-sugar to the 3-OH of anthocyanidin, with a preference for UDP-galactose (UDP-Gal) as sugar donor and cyanidin as substrate; able to use delphinidin, pelargonidin, peonidin and petunidin as substrates in the presence of UDP-Gal, but barely active on malvidin. Can also use UDP-glucose (UDP-Glu) as sugar donor with cyanidin, delphinidin, pelargonidin, peonidin and petunidin as substrates, but not active on malvidin. This is Anthocyanidin 3-O-galactosyltransferase 3GT6 from Rhododendron delavayi (Rhododendron).